We begin with the raw amino-acid sequence, 213 residues long: Large ribosomal subunit protein uL1 (213 aa).

The protein belongs to the universal ribosomal protein uL1 family. In terms of assembly, part of the 50S ribosomal subunit.

Its function is as follows. Binds directly to 23S rRNA. Probably involved in E site tRNA release. In terms of biological role, protein L1 is also a translational repressor protein, it controls the translation of its operon by binding to its mRNA. This Methanococcoides burtonii (strain DSM 6242 / NBRC 107633 / OCM 468 / ACE-M) protein is Large ribosomal subunit protein uL1.